Here is a 465-residue protein sequence, read N- to C-terminus: Cysteine--tRNA ligase (465 aa).

C28 is a Zn(2+) binding site. The short motif at 30–40 (MTVYDYCHLGH) is the 'HIGH' region element. The Zn(2+) site is built by C209, H234, and E238. Positions 266-270 (KMSKS) match the 'KMSKS' region motif. Residue K269 coordinates ATP.

It belongs to the class-I aminoacyl-tRNA synthetase family. Monomer. Zn(2+) serves as cofactor.

It is found in the cytoplasm. The catalysed reaction is tRNA(Cys) + L-cysteine + ATP = L-cysteinyl-tRNA(Cys) + AMP + diphosphate. This is Cysteine--tRNA ligase from Methylococcus capsulatus (strain ATCC 33009 / NCIMB 11132 / Bath).